Here is a 241-residue protein sequence, read N- to C-terminus: Ribose-5-phosphate isomerase A (241 aa).

Residues Thr28–Thr31, Asp83–Asp86, and Lys96–Gly99 contribute to the substrate site. Glu105 (proton acceptor) is an active-site residue. Substrate is bound at residue Lys123.

This sequence belongs to the ribose 5-phosphate isomerase family. As to quaternary structure, homodimer.

It carries out the reaction aldehydo-D-ribose 5-phosphate = D-ribulose 5-phosphate. Its pathway is carbohydrate degradation; pentose phosphate pathway; D-ribose 5-phosphate from D-ribulose 5-phosphate (non-oxidative stage): step 1/1. Functionally, catalyzes the reversible conversion of ribose-5-phosphate to ribulose 5-phosphate. The polypeptide is Ribose-5-phosphate isomerase A (Bradyrhizobium diazoefficiens (strain JCM 10833 / BCRC 13528 / IAM 13628 / NBRC 14792 / USDA 110)).